A 459-amino-acid polypeptide reads, in one-letter code: FBD-associated F-box protein At5g27750 (459 aa).

Residues 4–50 (FDRISELPESLITQILLCLPTKDSVKTSVLSTRWKNLWLNVPGLDLT) enclose the F-box domain. The FBD domain maps to 374–426 (TEELNLINVPRCIVSTLECVEIKGLFEWEEEEMKIARYFLENAAVLKKLTMSF).

The protein is FBD-associated F-box protein At5g27750 of Arabidopsis thaliana (Mouse-ear cress).